A 68-amino-acid chain; its full sequence is Conotoxin VnMMSK-01 (68 aa).

The first 20 residues, 1–20 (MMSKLGVLLTICLLLFPLTA), serve as a signal peptide directing secretion. Positions 21-50 (VPMDGDQPADLPALRTQDFEPERSPWFDPV) are excised as a propeptide. Intrachain disulfides connect Cys53/Cys65, Cys54/Cys61, and Cys58/Cys64. 4-hydroxyproline is present on Pro63.

The protein belongs to the conotoxin M superfamily. Expressed by the venom duct.

It localises to the secreted. In Conus ventricosus (Mediterranean cone), this protein is Conotoxin VnMMSK-01.